A 474-amino-acid chain; its full sequence is 2-succinylbenzoate--CoA ligase (474 aa).

It belongs to the ATP-dependent AMP-binding enzyme family. MenE subfamily.

It catalyses the reaction 2-succinylbenzoate + ATP + CoA = 2-succinylbenzoyl-CoA + AMP + diphosphate. The protein operates within quinol/quinone metabolism; 1,4-dihydroxy-2-naphthoate biosynthesis; 1,4-dihydroxy-2-naphthoate from chorismate: step 5/7. It functions in the pathway quinol/quinone metabolism; menaquinone biosynthesis. Its function is as follows. Converts 2-succinylbenzoate (OSB) to 2-succinylbenzoyl-CoA (OSB-CoA). The sequence is that of 2-succinylbenzoate--CoA ligase from Staphylococcus epidermidis (strain ATCC 35984 / DSM 28319 / BCRC 17069 / CCUG 31568 / BM 3577 / RP62A).